The primary structure comprises 926 residues: Probable Xaa-Pro aminopeptidase PTT_10145 (926 aa).

Positions 274, 285, 435, and 476 each coordinate Mn(2+). Disordered regions lie at residues 505-538, 595-615, 668-696, 711-741, and 865-926; these read GNPG…PGIS, KRDS…LSPV, SSST…EEKH, IGQS…KAAT, and MPVL…FLTR. Positions 506-515 are enriched in polar residues; the sequence is NPGTTEILNP. Basic and acidic residues-rich tracts occupy residues 685 to 696 and 719 to 730; these read SRQKSHTVEEKH and GPEERRRKAQSD. The segment covering 887–897 has biased composition (polar residues); sequence NNATNKRSMID. Basic and acidic residues predominate over residues 900–915; the sequence is PAERRTRPERPERPAR.

Belongs to the peptidase M24B family. It depends on Mn(2+) as a cofactor.

The enzyme catalyses Release of any N-terminal amino acid, including proline, that is linked to proline, even from a dipeptide or tripeptide.. Catalyzes the removal of a penultimate prolyl residue from the N-termini of peptides. This chain is Probable Xaa-Pro aminopeptidase PTT_10145, found in Pyrenophora teres f. teres (strain 0-1) (Barley net blotch fungus).